We begin with the raw amino-acid sequence, 320 residues long: Glutaconate CoA-transferase subunit A (320 aa).

This sequence belongs to the 3-oxoacid CoA-transferase subunit A family. Heterooctamer of four A and four B subunits.

It localises to the cytoplasm. It catalyses the reaction trans-glutaconate + acetyl-CoA = (2E)-glutaconyl-CoA + acetate. Its pathway is amino-acid degradation; L-glutamate degradation via hydroxyglutarate pathway; crotonoyl-CoA from L-glutamate: step 3/5. In terms of biological role, catalyzes the transfer of the CoA moiety from acetyl-CoA to (R)-2-hydroxyglutarate and related compounds like glutaconate. In Acidaminococcus fermentans (strain ATCC 25085 / DSM 20731 / CCUG 9996 / CIP 106432 / VR4), this protein is Glutaconate CoA-transferase subunit A (gctA).